The sequence spans 365 residues: Aspartate-semialdehyde dehydrogenase (365 aa).

Thr-13, Gly-14, Ser-15, Val-16, Ser-38, Ser-41, Leu-85, and Asp-86 together coordinate NADP(+). Residue Thr-13 is modified to Phosphothreonine. Cys-156 (acyl-thioester intermediate) is an active-site residue. Residue Gly-188 coordinates NADP(+). The active-site Proton acceptor is His-256. 2 positions are modified to phosphoserine: Ser-318 and Ser-323. An NADP(+)-binding site is contributed by Asn-343.

The protein belongs to the aspartate-semialdehyde dehydrogenase family. Homotetramer.

It is found in the cytoplasm. The protein localises to the cytosol. The protein resides in the nucleus. The catalysed reaction is L-aspartate 4-semialdehyde + phosphate + NADP(+) = 4-phospho-L-aspartate + NADPH + H(+). Its pathway is amino-acid biosynthesis; L-methionine biosynthesis via de novo pathway; L-homoserine from L-aspartate: step 2/3. It functions in the pathway amino-acid biosynthesis; L-threonine biosynthesis; L-threonine from L-aspartate: step 2/5. In terms of biological role, catalyzes the NADPH-dependent formation of L-aspartate 4-semialdehyde (L-ASA) by the reductive dephosphorylation of 4-phospho-L-aspartate. Mediates the second step in the biosynthesis of amino acids that derive from aspartate (the aspartate family of amino acids), including methioinine and threonine, the latter of which is a precursor to isoleucine. The chain is Aspartate-semialdehyde dehydrogenase (HOM2) from Saccharomyces cerevisiae (strain ATCC 204508 / S288c) (Baker's yeast).